The following is a 92-amino-acid chain: Small ribosomal subunit protein uS19c (92 aa).

Belongs to the universal ribosomal protein uS19 family.

The protein resides in the plastid. It localises to the chloroplast. Protein S19 forms a complex with S13 that binds strongly to the 16S ribosomal RNA. The sequence is that of Small ribosomal subunit protein uS19c from Liriodendron tulipifera (Tuliptree).